The sequence spans 260 residues: Protein TONNEAU 1a (260 aa).

The region spanning 73–105 (SGRLLSALICEYLDWAQLNHTLIVYQPESNLPK) is the LisH domain. 2 disordered regions span residues 147 to 224 (TQGM…EEVT) and 236 to 260 (DRKT…EGRD). Over residues 161 to 175 (ESSSSLESRNPPRRS) the composition is skewed to low complexity. Basic and acidic residues predominate over residues 248-260 (NVRDGTNEEEGRD).

In terms of assembly, interacts with CEN1, LNG1/TRM2 and LNG2/TRM1 (via C-terminus).

It is found in the cytoplasm. The protein localises to the cytoskeleton. Functionally, involved in the control of the dynamic organization of the cortical cytoskeleton. May play a role in the organization of microtubule arrays at the centrosome through interaction with centrin 1 (CEN1). The sequence is that of Protein TONNEAU 1a (TON1A) from Arabidopsis thaliana (Mouse-ear cress).